Consider the following 496-residue polypeptide: MVEADHPGKLFIGGLNRETNEKMLKAVFGKHGPISEVLLIKDRTSKSRGFAFITFENPADAKNAAKDMNGKSLHGKAIKVEQAKKPSFQSGGRRRPPASSRNRSPSGSLRSARGSRGGTRGWLPSQEGHLDDGGYTPDLKMSYSRGLIPVKRGPSSRSGGPPPKKSAPSAVARSNSWMGSQGPMSQRRENYGVPPRRATISSWRNDRMSTRHDGYATNDGNHPSCQETRDYAPPSRGYAYRDNGHSNRDEHSSRGYRNHRSSRETRDYAPPSRGHAYRDYGHSRRDESYSRGYRNRRSSRETREYAPPSRGHGYRDYGHSRRHESYSRGYRNHPSSRETRDYAPPHRDYAYRDYGHSSWDEHSSRGYSYHDGYGEALGRDHSEHLSGSSYRDALQRYGTAHGAPPARGPRMSYGGSTCHAYSNTRDRYGRSWESYSSCGDFHYCDREHVCRKDQRNPPSLGRVLPDPREACGSSSYVASIVDGGESRSEKGDSSRY.

One can recognise an RRM domain in the interval 8–85 (GKLFIGGLNR…KAIKVEQAKK (78 aa)). Disordered stretches follow at residues 67-348 (DMNG…PHRD) and 453-496 (DQRN…SSRY). Low complexity-rich tracts occupy residues 97–114 (PASS…SARG) and 149–159 (PVKRGPSSRSG). Residues 175-184 (NSWMGSQGPM) are compositionally biased toward polar residues. Composition is skewed to basic and acidic residues over residues 204–214 (RNDRMSTRHDG), 242–253 (DNGHSNRDEHSS), 276–289 (AYRD…DESY), 313–326 (GYRD…HESY), 335–348 (SSRE…PHRD), and 484–496 (GESR…SSRY).

As to quaternary structure, interacts with splicing factor proteins SFRS3/SRP20, TRA2B/SFRS10, KHDRBS1/SAM68 and KHDRBS3. As to expression, testis-specific.

It localises to the nucleus. In terms of biological role, RNA-binding protein which may be involved in spermatogenesis. Required for sperm development, possibly by participating in pre-mRNA splicing in the testis. This Homo sapiens (Human) protein is RNA-binding motif protein, Y chromosome, family 1 member E (RBMY1E).